Consider the following 310-residue polypeptide: GPN-loop GTPase 2 (310 aa).

A2 is subject to N-acetylalanine. 19-24 contributes to the GTP binding site; that stretch reads GSGKTT. The Gly-Pro-Asn (GPN)-loop; involved in dimer interface motif lies at 76–78; that stretch reads GPN. 178 to 181 contributes to the GTP binding site; sequence SKMD.

This sequence belongs to the GPN-loop GTPase family. In terms of assembly, heterodimers with GPN1 or GPN3. Binds to RNA polymerase II (RNAPII).

In terms of biological role, small GTPase required for proper localization of RNA polymerase II and III (RNAPII and RNAPIII). May act at an RNAP assembly step prior to nuclear import. The polypeptide is GPN-loop GTPase 2 (GPN2) (Bos taurus (Bovine)).